A 510-amino-acid chain; its full sequence is Inositol-3-phosphate synthase (510 aa).

Positions 70, 71, 72, 73, 143, 180, 190, 193, 230, 231, 232, 233, 281, 282, 306, 309, 340, 341, 342, 355, 393, 394, 422, and 423 each coordinate NAD(+).

It belongs to the myo-inositol 1-phosphate synthase family. The cofactor is NAD(+).

The protein resides in the cytoplasm. Its subcellular location is the cytosol. The protein localises to the nucleus. The catalysed reaction is D-glucose 6-phosphate = 1D-myo-inositol 3-phosphate. The protein operates within polyol metabolism; myo-inositol biosynthesis; myo-inositol from D-glucose 6-phosphate: step 1/2. In terms of biological role, key enzyme in myo-inositol biosynthesis pathway that catalyzes the conversion of glucose 6-phosphate to 1-myo-inositol 1-phosphate in a NAD-dependent manner. This is Inositol-3-phosphate synthase from Zea mays (Maize).